The sequence spans 322 residues: Allergen Asp f 4 (322 aa).

An N-terminal signal peptide occupies residues 1–20 (MQLKNSMLLLTALAAGSSVA). Low complexity predominate over residues 80–105 (AAAAAASTPEPSSSHSDSSSSSGVSA). Positions 80–109 (AAAAAASTPEPSSSHSDSSSSSGVSADWTN) are disordered.

Its subcellular location is the secreted. The polypeptide is Allergen Asp f 4 (Aspergillus fumigatus (strain ATCC MYA-4609 / CBS 101355 / FGSC A1100 / Af293) (Neosartorya fumigata)).